The following is a 3333-amino-acid chain: Laminin subunit alpha-3 (3333 aa).

The first 35 residues, 1 to 35 (MAAAARPRGRALGPVLPPTPLLLLVLRVLPACGAT), serve as a signal peptide directing secretion. In terms of domain architecture, Laminin N-terminal spans 43–298 (AGLSLHPTYF…SIKDISIGGQ (256 aa)). 2 N-linked (GlcNAc...) asparagine glycosylation sites follow: Asn142 and Asn242. The interval 298–728 (QCVCNGHAEV…NNYYFPDLHH (431 aa)) is domain V. 29 disulfides stabilise this stretch: Cys299–Cys308, Cys301–Cys319, Cys321–Cys330, Cys333–Cys353, Cys356–Cys365, Cys358–Cys390, Cys393–Cys402, Cys405–Cys423, Cys426–Cys436, Cys428–Cys443, Cys445–Cys454, Cys457–Cys467, Cys491–Cys503, Cys493–Cys509, Cys511–Cys520, Cys523–Cys533, Cys536–Cys548, Cys538–Cys555, Cys557–Cys566, Cys569–Cys586, Cys601–Cys610, Cys613–Cys628, Cys631–Cys645, Cys633–Cys652, Cys654–Cys663, Cys666–Cys681, Cys684–Cys696, Cys686–Cys703, and Cys705–Cys714. Laminin EGF-like domains follow at residues 299–355 (CVCN…ECEA), 356–425 (CNCH…GCIP), 426–469 (CSCD…FCLR), 491–535 (CDCN…ICQA), 536–588 (CWCS…ACDP), 590–630 (GTIN…GCSE), 631–683 (CKCH…GCQG), and 684–728 (CQCD…DLHH). The domain IV 1 (domain IV B) stretch occupies residues 796–1265 (TEAVSGHITI…VAFYHKGALP (470 aa)). Cystine bridges form between Cys1266–Cys1278, Cys1268–Cys1285, Cys1287–Cys1296, Cys1299–Cys1309, Cys1312–Cys1319, Cys1314–Cys1326, Cys1328–Cys1337, Cys1340–Cys1353, Cys1356–Cys1371, Cys1358–Cys1378, Cys1380–Cys1389, Cys1392–Cys1402, Cys1405–Cys1417, Cys1407–Cys1424, Cys1426–Cys1435, and Cys1438–Cys1453. Laminin EGF-like domains follow at residues 1266-1311 (CECH…RCKP), 1312-1355 (CSCG…GCEG), 1356-1404 (CNCS…ECVP), and 1405-1455 (CNCN…GCTS). The interval 1266–1465 (CECHPTGATG…CFCFGVNNQC (200 aa)) is domain III B. Positions 1476-1653 (VDMLGWHLET…SGRIALAVEI (178 aa)) constitute a Laminin IV type A domain. A domain III A region spans residues 1654-1821 (CACPPAYAGD…DSSPAEECDD (168 aa)). Disulfide bonds link Cys1687-Cys1696, Cys1689-Cys1703, Cys1706-Cys1715, Cys1718-Cys1731, Cys1734-Cys1746, Cys1736-Cys1755, Cys1757-Cys1766, and Cys1769-Cys1784. Laminin EGF-like domains follow at residues 1687–1733 (CNCN…SCRA) and 1734–1786 (CPCP…SCQP). A Laminin EGF-like 15; truncated domain is found at 1787–1821 (CSCNSNGQLGSCHPLTGDCINQEPKDSSPAEECDD). The interval 1822–2389 (CDSCVMTLLN…ARDAASKVAV (568 aa)) is domain II and I. Coiled-coil stretches lie at residues 1852–1941 (ASAG…KNVI) and 1987–2169 (KHLR…DELV). The Cell attachment site signature appears at 2278–2280 (RGD). A coiled-coil region spans residues 2322–2388 (RTQNEDFKKA…QARDAASKVA (67 aa)). N-linked (GlcNAc...) asparagine glycans are attached at residues Asn2365, Asn2502, and Asn2584. Laminin G-like domains follow at residues 2390 to 2591 (PMRF…VEPC), 2598 to 2760 (SDKN…TKKC), 2767 to 2927 (VRSA…LGGC), 2986 to 3150 (ALQF…VSSC), and 3157 to 3330 (KGIY…LNGC). 5 disulfide bridges follow: Cys2561/Cys2591, Cys2737/Cys2760, Cys2895/Cys2927, Cys3127/Cys3150, and Cys3302/Cys3330.

As to quaternary structure, laminin is a complex glycoprotein, consisting of three different polypeptide chains (alpha, beta, gamma), which are bound to each other by disulfide bonds into a cross-shaped molecule comprising one long and three short arms with globules at each end. Alpha-3 is a subunit of laminin-5 (laminin-332 or epiligrin/kalinin/nicein), laminin-6 (laminin-311 or K-laminin) and laminin-7 (laminin-321 or KS-laminin). As to expression, skin; respiratory, urinary, and digestive epithelia and in other specialized tissues with prominent secretory or protective functions. Epithelial basement membrane, and epithelial cell tongue that migrates into a wound bed. A differential and focal expression of the subunit alpha-3 is observed in the CNS.

The protein resides in the secreted. It localises to the extracellular space. It is found in the extracellular matrix. Its subcellular location is the basement membrane. Binding to cells via a high affinity receptor, laminin is thought to mediate the attachment, migration and organization of cells into tissues during embryonic development by interacting with other extracellular matrix components. Functionally, laminin-5 is thought to be involved in (1) cell adhesion via integrin alpha-3/beta-1 in focal adhesion and integrin alpha-6/beta-4 in hemidesmosomes, (2) signal transduction via tyrosine phosphorylation of pp125-FAK and p80, (3) differentiation of keratinocytes. This Homo sapiens (Human) protein is Laminin subunit alpha-3 (LAMA3).